The following is a 929-amino-acid chain: MTDYSKTVNLLESPFPMRGNLAKREPAWLKSWYEQKRYQKLREIAKGRPKFILHDGPPYANGDIHIGHAVNKILKDIIIRSKTQAGFDAPYVPGWDCHGLPIEVMVEKLHGKDMPKARFRELCREYAAEQIARQKKDFIRLGVLGDWDHPYLTMDFKTEADTVRMLGEIYKSGYLYRGAKPVQFCLDCGSSLAEAEVEYKDKISPAIDVAYLFKDTAALAAAFGLAGFEGKAFAVIWTTTPWTLPASQAVSAGADVVYQLIDTPKGKLVLAKDLAEDALKRYGFSDGIAILAETTGDKLENLHMNHPFLERDIPMLNGEHVTTDAGTGLVHTAPAHGLEDYAVCNKYGIELYNPVNAEGRYIGETPRVAGMRVWEANPVILQWLEETGNLLASSKIEHSYAHCWRHKTPLIYRATGQWFVGMDKAGADGKTLRDKAIKAVDDTEFFPSWGRARLEAMIEGRPDWVVSRQRYWGTPMTFFVHKETGELHPNSAELLEKVALKIEEKGIEAWFSLDKSELLSAEDCENYDKLSDTMDVWFDSGSTHYSVVKQREELEWPADLYLEGSDQHRGWFQSSMLTGCASSMGRAPYKQLLTHGFVVDGEGKKMSKSIGNVVAPQEVYNEFGADILRLWAASTDYSGELAISKEILKRVTESYRRIRNTLSFLFANLSDFNPIEDAVQQADMVEIDRYAVVLARQLQECLAGDYYPRYAFHFAVKDIVSFCSEDLGAFYLDILKDRLYTTKADSHARRSAQTALYHITRSLVLLIAPILCFTGEEAWDIIGGGEEDSVLFHTWHEFPTINEKTEAELVKKWTAIREAREAVTAAIEPLRADKTVGSSLQAEAEITAPEEMAGYLNALGEELRFALLVSKAEVKVGSELAVAAKASDGEKCERCWHYTRDVGAVAGYETVCKRCAENVGGEGETRHYA.

The short motif at 58–68 is the 'HIGH' region element; sequence PYANGDIHIGH. An L-isoleucyl-5'-AMP-binding site is contributed by Glu-563. The 'KMSKS' region motif lies at 605 to 609; sequence KMSKS. Lys-608 contacts ATP. Residues Cys-892, Cys-895, Cys-912, and Cys-915 each coordinate Zn(2+).

It belongs to the class-I aminoacyl-tRNA synthetase family. IleS type 1 subfamily. In terms of assembly, monomer. Requires Zn(2+) as cofactor.

It localises to the cytoplasm. It catalyses the reaction tRNA(Ile) + L-isoleucine + ATP = L-isoleucyl-tRNA(Ile) + AMP + diphosphate. Functionally, catalyzes the attachment of isoleucine to tRNA(Ile). As IleRS can inadvertently accommodate and process structurally similar amino acids such as valine, to avoid such errors it has two additional distinct tRNA(Ile)-dependent editing activities. One activity is designated as 'pretransfer' editing and involves the hydrolysis of activated Val-AMP. The other activity is designated 'posttransfer' editing and involves deacylation of mischarged Val-tRNA(Ile). The polypeptide is Isoleucine--tRNA ligase (Neisseria meningitidis serogroup B (strain ATCC BAA-335 / MC58)).